Here is a 144-residue protein sequence, read N- to C-terminus: NADH dehydrogenase [ubiquinone] 1 alpha subcomplex subunit 13 (144 aa).

A2 carries the post-translational modification N-acetylalanine. A helical transmembrane segment spans residues 30 to 51 (LSGYSMFAVGIGALLFGYWSMM).

Complex I is composed of 45 different subunits. Interacts with CARD15, but not with CARD4. Interacts with STAT3, but not with STAT1, STAT2 and STAT5A. Interacts with OLFM4.

The protein localises to the mitochondrion inner membrane. The protein resides in the nucleus. In terms of biological role, accessory subunit of the mitochondrial membrane respiratory chain NADH dehydrogenase (Complex I), that is believed not to be involved in catalysis. Complex I functions in the transfer of electrons from NADH to the respiratory chain. The immediate electron acceptor for the enzyme is believed to be ubiquinone. Involved in the interferon/all-trans-retinoic acid (IFN/RA) induced cell death. This apoptotic activity is inhibited by interaction with viral IRF1. Prevents the transactivation of STAT3 target genes. May play a role in CARD15-mediated innate mucosal responses and serve to regulate intestinal epithelial cell responses to microbes. The protein is NADH dehydrogenase [ubiquinone] 1 alpha subcomplex subunit 13 (NDUFA13) of Bos taurus (Bovine).